Consider the following 562-residue polypeptide: Glutamine--tRNA ligase (562 aa).

Residues 35–45 carry the 'HIGH' region motif; it reads PEPNGYLHIGH. Residues 36-38 and 42-48 contribute to the ATP site; these read EPN and HIGHAKS. L-glutamine contacts are provided by Asp68 and Tyr213. Residues Thr232 and 264 to 265 contribute to the ATP site; that span reads RL. Positions 271–275 match the 'KMSKS' region motif; that stretch reads ITSKR.

Belongs to the class-I aminoacyl-tRNA synthetase family. As to quaternary structure, monomer.

It localises to the cytoplasm. The catalysed reaction is tRNA(Gln) + L-glutamine + ATP = L-glutaminyl-tRNA(Gln) + AMP + diphosphate. The chain is Glutamine--tRNA ligase from Neisseria gonorrhoeae (strain ATCC 700825 / FA 1090).